The primary structure comprises 325 residues: Tagatose 1,6-diphosphate aldolase 1 (325 aa).

The protein belongs to the aldolase LacD family.

It carries out the reaction D-tagatofuranose 1,6-bisphosphate = D-glyceraldehyde 3-phosphate + dihydroxyacetone phosphate. The protein operates within carbohydrate metabolism; D-tagatose 6-phosphate degradation; D-glyceraldehyde 3-phosphate and glycerone phosphate from D-tagatose 6-phosphate: step 2/2. This is Tagatose 1,6-diphosphate aldolase 1 (lacD1) from Enterococcus faecalis (strain ATCC 700802 / V583).